Reading from the N-terminus, the 719-residue chain is Polyribonucleotide nucleotidyltransferase (719 aa).

Mg(2+) contacts are provided by aspartate 507 and aspartate 513. One can recognise a KH domain in the interval 573–633 (PKLELFSVDP…EQIKAAKDYI (61 aa)). The S1 motif domain occupies 658–719 (GQEFQGIVKK…NGKISVDLCE (62 aa)).

It belongs to the polyribonucleotide nucleotidyltransferase family. Mg(2+) is required as a cofactor.

The protein localises to the cytoplasm. The enzyme catalyses RNA(n+1) + phosphate = RNA(n) + a ribonucleoside 5'-diphosphate. In terms of biological role, involved in mRNA degradation. Catalyzes the phosphorolysis of single-stranded polyribonucleotides processively in the 3'- to 5'-direction. This is Polyribonucleotide nucleotidyltransferase from Campylobacter jejuni (strain RM1221).